A 286-amino-acid polypeptide reads, in one-letter code: 1D-myo-inositol 2-acetamido-2-deoxy-alpha-D-glucopyranoside deacetylase (286 aa).

Zn(2+)-binding residues include His12, Asp15, and His147.

This sequence belongs to the MshB deacetylase family. Zn(2+) is required as a cofactor.

It carries out the reaction 1D-myo-inositol 2-acetamido-2-deoxy-alpha-D-glucopyranoside + H2O = 1D-myo-inositol 2-amino-2-deoxy-alpha-D-glucopyranoside + acetate. Functionally, catalyzes the deacetylation of 1D-myo-inositol 2-acetamido-2-deoxy-alpha-D-glucopyranoside (GlcNAc-Ins) in the mycothiol biosynthesis pathway. The sequence is that of 1D-myo-inositol 2-acetamido-2-deoxy-alpha-D-glucopyranoside deacetylase from Thermobifida fusca (strain YX).